Reading from the N-terminus, the 104-residue chain is Large ribosomal subunit protein bL21 (104 aa).

The protein belongs to the bacterial ribosomal protein bL21 family. Part of the 50S ribosomal subunit. Contacts protein L20.

Its function is as follows. This protein binds to 23S rRNA in the presence of protein L20. This chain is Large ribosomal subunit protein bL21, found in Alkalilimnicola ehrlichii (strain ATCC BAA-1101 / DSM 17681 / MLHE-1).